A 197-amino-acid chain; its full sequence is uncharacterized protein (197 aa).

4 helical membrane passes run 9–29 (IYIL…RFIL), 67–87 (LASL…ILML), 104–124 (IIAV…ISVI), and 160–180 (GLDL…MLVI).

Belongs to the YggT family.

The protein localises to the cell membrane. This is an uncharacterized protein from Pseudomonas aeruginosa (strain ATCC 15692 / DSM 22644 / CIP 104116 / JCM 14847 / LMG 12228 / 1C / PRS 101 / PAO1).